We begin with the raw amino-acid sequence, 110 residues long: Cytochrome bo(3) ubiquinol oxidase subunit 4 (110 aa).

Residues 1 to 18 are Cytoplasmic-facing; the sequence is MANAHDTHHEGNHGSVKS. A helical transmembrane segment spans residues 19 to 39; it reads YMIGFILSIILTAIPFGLAMS. Over 40–46 the chain is Periplasmic; the sequence is PSLPKNL. The helical transmembrane segment at 47-67 threads the bilayer; that stretch reads TVLIIVAMAVIQVVVHLVYFL. Over 68–78 the chain is Cytoplasmic; sequence HMDRSKEQRNN. The helical transmembrane segment at 79 to 99 threads the bilayer; the sequence is VWTFLFTTLVIALLVGLSLWI. Residues 100–110 are Periplasmic-facing; sequence MFSIHFEMLAK.

This sequence belongs to the cytochrome c oxidase bacterial subunit 4 family. Heterooctamer of two A chains, two B chains, two C chains and two D chains.

It is found in the cell inner membrane. Its function is as follows. Cytochrome bo(3) ubiquinol terminal oxidase is the component of the aerobic respiratory chain of E.coli that predominates when cells are grown at high aeration. Has proton pump activity across the membrane in addition to electron transfer, pumping 2 protons/electron. The sequence is that of Cytochrome bo(3) ubiquinol oxidase subunit 4 (cyoD) from Pseudomonas putida (Arthrobacter siderocapsulatus).